Consider the following 248-residue polypeptide: Small ribosomal subunit protein uS3 (248 aa).

A KH type-2 domain is found at 39–108 (IRKLVDKKLS…TVAVNVAEIP (70 aa)). The segment at 214–248 (ETIARPQRRNDERRPEGGDRANRRRPTARRRAGGE) is disordered. Basic and acidic residues predominate over residues 221–234 (RRNDERRPEGGDRA). Residues 235–248 (NRRRPTARRRAGGE) are compositionally biased toward basic residues.

This sequence belongs to the universal ribosomal protein uS3 family. In terms of assembly, part of the 30S ribosomal subunit. Forms a tight complex with proteins S10 and S14.

Its function is as follows. Binds the lower part of the 30S subunit head. Binds mRNA in the 70S ribosome, positioning it for translation. In Deinococcus deserti (strain DSM 17065 / CIP 109153 / LMG 22923 / VCD115), this protein is Small ribosomal subunit protein uS3.